The sequence spans 39 residues: Photosystem II reaction center protein L (39 aa).

The chain crosses the membrane as a helical span at residues 18–38 (SLYLGLLLIAVLGILFSSYFF).

The protein belongs to the PsbL family. PSII is composed of 1 copy each of membrane proteins PsbA, PsbB, PsbC, PsbD, PsbE, PsbF, PsbH, PsbI, PsbJ, PsbK, PsbL, PsbM, PsbT, PsbX, PsbY, PsbZ, Psb30/Ycf12, peripheral proteins PsbO, CyanoQ (PsbQ), PsbU, PsbV and a large number of cofactors. It forms dimeric complexes.

Its subcellular location is the cellular thylakoid membrane. Its function is as follows. One of the components of the core complex of photosystem II (PSII). PSII is a light-driven water:plastoquinone oxidoreductase that uses light energy to abstract electrons from H(2)O, generating O(2) and a proton gradient subsequently used for ATP formation. It consists of a core antenna complex that captures photons, and an electron transfer chain that converts photonic excitation into a charge separation. This subunit is found at the monomer-monomer interface and is required for correct PSII assembly and/or dimerization. The polypeptide is Photosystem II reaction center protein L (Crocosphaera subtropica (strain ATCC 51142 / BH68) (Cyanothece sp. (strain ATCC 51142))).